A 1027-amino-acid polypeptide reads, in one-letter code: Abnormal embryogenesis protein 30 (1027 aa).

WD repeat units lie at residues 18–65 (RTPF…IQAV) and 70–109 (KLDS…VRFS). Disordered regions lie at residues 619–655 (NDSS…ACDL) and 1005–1027 (AMDS…DDDI). Composition is skewed to acidic residues over residues 625 to 647 (LEED…EPEG) and 1014 to 1027 (DNGE…DDDI).

It belongs to the APC4 family. In terms of assembly, the APC/C is probably composed of at least 12 subunits: apc-2, apc-10, apc-11, cdc-26, emb-1, emb-27, emb-30, mat-1, mat-2, mat-3, such-1 and gfi-3.

It functions in the pathway protein modification; protein ubiquitination. Probable component of the anaphase promoting complex/cyclosome (APC/C), a cell cycle-regulated E3 ubiquitin ligase that controls progression through mitosis and the G1 phase of the cell cycle. The APC/C complex acts by mediating ubiquitination and subsequent degradation of target proteins. Developmental role in early embryogenesis and the metaphase to anaphase transition in oocyte and spermatocyte meiosis and mitosis in somatic and germ cells. Required for embryonic anterior-posterior axis formation. Negatively regulates ify-1 protein levels during meiosis I. Plays a role in regulating the abundance of glr-1 receptors in postmitotic neurons, which may in turn control animal locomotion. Involved in regulating GABA neurotransmitter release at neuromuscular junctions in GABA motor neurons. This Caenorhabditis elegans protein is Abnormal embryogenesis protein 30.